The sequence spans 729 residues: Isocitrate dehydrogenase [NADP] (729 aa).

NADP(+) contacts are provided by Asn83 and Ser85. Residues Ser121, Asn124, Arg128, Arg134, and Lys244 each contribute to the D-threo-isocitrate site. Asn124 contacts NADP(+). Asp337 serves as a coordination point for Mg(2+). D-threo-isocitrate-binding residues include Tyr407 and Arg534. Positions 535 and 539 each coordinate Mg(2+). Residues Ser572, His576, Arg587, Asp589, and Arg636 each coordinate NADP(+).

It belongs to the monomeric-type IDH family. In terms of assembly, monomer. The cofactor is Mg(2+). Requires Mn(2+) as cofactor.

The catalysed reaction is D-threo-isocitrate + NADP(+) = 2-oxoglutarate + CO2 + NADPH. Catalyzes the oxidative decarboxylation of isocitrate to 2-oxoglutarate and carbon dioxide with the concomitant reduction of NADP(+). This chain is Isocitrate dehydrogenase [NADP], found in Corynebacterium efficiens (strain DSM 44549 / YS-314 / AJ 12310 / JCM 11189 / NBRC 100395).